The chain runs to 310 residues: Taste receptor type 2 member 125 (310 aa).

Residues 1–2 lie on the Extracellular side of the membrane; it reads MG. The chain crosses the membrane as a helical span at residues 3 to 23; that stretch reads IVIGIICAFIIIVQFIIGNVA. The Cytoplasmic portion of the chain corresponds to 24 to 46; it reads NGFIALVNIIDWVKRRKISLVDQ. The helical transmembrane segment at 47–67 threads the bilayer; sequence IITALAISRIDMLCSTFLIVL. Over 68 to 87 the chain is Extracellular; the sequence is ITSLYPDLNTAVNMVKISNN. Residues 88–108 traverse the membrane as a helical segment; the sequence is IWIVANHFSIWLATSLSIFYF. The Cytoplasmic portion of the chain corresponds to 109–128; the sequence is LKIANFSNYVFLCLRWRLSK. A helical membrane pass occupies residues 129–149; that stretch reads VVSVTLLLSLVLLLMNILIMN. The Extracellular segment spans residues 150–185; it reads MHIDTWSDGFKRNVSFGFRSKNCTRFFKLALLINTT. N-linked (GlcNAc...) asparagine glycans are attached at residues Asn-162, Asn-171, and Asn-183. The helical transmembrane segment at 186 to 206 threads the bilayer; it reads FTCVPFTVSMVAFLLLIFSLW. Residues 207 to 232 lie on the Cytoplasmic side of the membrane; it reads RHLKNMQYHAKGSRDPSTAVHIKALQ. Residues 233-253 form a helical membrane-spanning segment; the sequence is MVVVFVLFYTFFFLSLAIQLW. The Extracellular portion of the chain corresponds to 254–261; sequence TSESLEKN. The helical transmembrane segment at 262–282 threads the bilayer; sequence NLFYVTLIITFPSVHSCMLIL. At 283–310 the chain is on the cytoplasmic side; the sequence is RNSKLRQASLLVLWWLLCRSKDIQTLVP.

Belongs to the G-protein coupled receptor T2R family.

The protein resides in the membrane. Its function is as follows. Putative taste receptor which may play a role in the perception of bitterness. This chain is Taste receptor type 2 member 125, found in Rattus norvegicus (Rat).